We begin with the raw amino-acid sequence, 266 residues long: Single-stranded DNA-binding protein WHY1, chloroplastic (266 aa).

A chloroplast-targeting transit peptide spans 1–37 (MPPPAPLFLSLASTPPPALMPVHHPRAPQSLTLVPPV). The interval 53–81 (SPRHSDYFDPRAPPPPRGDGGYGRPPNGA) is disordered. The tract at residues 94–99 (KGKAAL) is required for ssDNA binding. Residues 172–185 (KGRSEEGKVRKVLK) carry the Nuclear localization signal motif.

It belongs to the Whirly family. Homotetramer.

The protein localises to the plastid. It localises to the chloroplast stroma. Its subcellular location is the nucleus. In terms of biological role, single-stranded DNA and RNA binding protein that maintains plastid genome stability by preventing break-induced and short homology-dependent illegitimate recombinations. Functions in RNA metabolism and is involved in the maturation of the atpF and 23S ribosomal RNAs. This is Single-stranded DNA-binding protein WHY1, chloroplastic (WHY1) from Zea mays (Maize).